A 343-amino-acid chain; its full sequence is Mediator of RNA polymerase II transcription subunit 2 (343 aa).

Disordered regions lie at residues 105–141 and 252–277; these read KQQQ…AQQL and STNE…ISSN. Positions 107-132 are enriched in basic and acidic residues; it reads QQEEEQRRKHQAELEKNKRQQEHDAA. Polar residues predominate over residues 252–264; it reads STNEASTNNRNND.

The protein belongs to the Mediator complex subunit 2 family. Component of the Mediator complex.

It is found in the nucleus. Its function is as follows. Component of the Mediator complex, a coactivator involved in the regulated transcription of nearly all RNA polymerase II-dependent genes. Mediator functions as a bridge to convey information from gene-specific regulatory proteins to the basal RNA polymerase II transcription machinery. Mediator is recruited to promoters by direct interactions with regulatory proteins and serves as a scaffold for the assembly of a functional preinitiation complex with RNA polymerase II and the general transcription factors. The sequence is that of Mediator of RNA polymerase II transcription subunit 2 (MED2) from Eremothecium gossypii (strain ATCC 10895 / CBS 109.51 / FGSC 9923 / NRRL Y-1056) (Yeast).